Consider the following 146-residue polypeptide: MGRFIFLSFGLLVVFVSLSGTGADCPSDWSSYEGHCYRVFQKEMTWEDAEKFCTQQRKESHLVSFHSSEEVDFVVSMTWPILKYDFVWIGLNNIWNECMVEWTDGTRLSHNAWITESECIAAKTTDNQWLSRPCSRTYNVVCKFQE.

The signal sequence occupies residues 1-23 (MGRFIFLSFGLLVVFVSLSGTGA). Disulfide bonds link cysteine 25–cysteine 36, cysteine 53–cysteine 142, and cysteine 119–cysteine 134. The 112-residue stretch at 32 to 143 (YEGHCYRVFQ…CSRTYNVVCK (112 aa)) folds into the C-type lectin domain.

In terms of assembly, heterodimer of subunits alpha and beta; disulfide-linked. Expressed by the venom gland.

It is found in the secreted. Functionally, binds to platelet GPIbalpha (GP1BA) and enhances platelet aggregation at low-shear stress. At high-shear stress, blocks platelet aggregation in a dose-dependent manner. This chain is Snaclec mamushigin subunit beta, found in Gloydius blomhoffii (Mamushi).